We begin with the raw amino-acid sequence, 247 residues long: Ice-binding protein (247 aa).

The N-terminal stretch at 1 to 19 (MTFSILSIFVFGLISSSVA) is a signal peptide. Asn-219 is a glycosylation site (N-linked (GlcNAc...) asparagine).

It belongs to the ice-binding protein family.

The protein localises to the secreted. In terms of biological role, binds ice crystals and most probably inhibits their growth in order to prevent cell damage from extracellular ice. The chain is Ice-binding protein from Flammulina populicola (Enokitake mushroom).